The following is a 193-amino-acid chain: Der GTPase-activating protein YihI (193 aa).

Over residues Met-1–Gly-12 the composition is skewed to basic residues. Disordered stretches follow at residues Met-1–Met-91 and Ile-143–Lys-193. Basic and acidic residues predominate over residues Lys-13 to Glu-26. The segment covering Arg-27 to Leu-36 has biased composition (basic residues). Polar residues predominate over residues Ser-40–Lys-54. The segment covering Asp-145–Ser-160 has biased composition (acidic residues). The span at Pro-184–Lys-193 shows a compositional bias: basic and acidic residues.

Belongs to the YihI family. In terms of assembly, interacts with Der.

Its function is as follows. A GTPase-activating protein (GAP) that modifies Der/EngA GTPase function. May play a role in ribosome biogenesis. This chain is Der GTPase-activating protein YihI, found in Aeromonas salmonicida (strain A449).